The following is a 163-amino-acid chain: Large ribosomal subunit protein bL17 (163 aa).

Low complexity predominate over residues 123–135; the sequence is AEASRATRASASK. The interval 123–163 is disordered; it reads AEASRATRASASKKAAEEAETEEVVEAPAEETATEEAAEEK. Residues 140 to 163 are compositionally biased toward acidic residues; the sequence is EAETEEVVEAPAEETATEEAAEEK.

The protein belongs to the bacterial ribosomal protein bL17 family. In terms of assembly, part of the 50S ribosomal subunit. Contacts protein L32.

The protein is Large ribosomal subunit protein bL17 of Corynebacterium glutamicum (strain ATCC 13032 / DSM 20300 / JCM 1318 / BCRC 11384 / CCUG 27702 / LMG 3730 / NBRC 12168 / NCIMB 10025 / NRRL B-2784 / 534).